A 97-amino-acid chain; its full sequence is Citrate lyase acyl carrier protein (97 aa).

S14 is subject to O-(phosphoribosyl dephospho-coenzyme A)serine.

It belongs to the CitD family. In terms of assembly, oligomer with a subunit composition of (alpha,beta,gamma)6.

Its subcellular location is the cytoplasm. In terms of biological role, covalent carrier of the coenzyme of citrate lyase. This Lactobacillus acidophilus (strain ATCC 700396 / NCK56 / N2 / NCFM) protein is Citrate lyase acyl carrier protein.